We begin with the raw amino-acid sequence, 688 residues long: Protein adenylyltransferase SelO, mitochondrial (688 aa).

The N-terminal 23 residues, 1-23, are a transit peptide targeting the mitochondrion; that stretch reads MGEKRTIIKALKNSAASHFIKKL. ATP is bound by residues G132, G134, R135, K156, D168, G169, R220, and R227. The Proton acceptor role is filled by D338. Mg(2+) is bound by residues N339 and D348. D348 is an ATP binding site.

This sequence belongs to the SELO family. Mg(2+) is required as a cofactor. Forms probably one or more intrachain disulfide bridges.

The protein resides in the mitochondrion. It carries out the reaction L-tyrosyl-[protein] + ATP = O-(5'-adenylyl)-L-tyrosyl-[protein] + diphosphate. Functionally, catalyzes the transfer of adenosine 5'-monophosphate (AMP) to Tyr residues of target mitochondrial proteins (AMPylation). Involved in redox homeostasis by regulating the cellular response to oxidative stress. Regulates protein S-glutathionylation levels possibly by AMPylation of deglutathionylation enzymes such as glutaredoxins. The chain is Protein adenylyltransferase SelO, mitochondrial from Saccharomyces cerevisiae (strain ATCC 204508 / S288c) (Baker's yeast).